Consider the following 640-residue polypeptide: Zinc finger and BTB domain-containing protein 22 (640 aa).

Positions 57-121 (CDVSIRVQGR…AYTGRLSMAA (65 aa)) constitute a BTB domain. 3 disordered regions span residues 191–244 (RSHA…PVFP), 308–327 (PAPAPLVPQDPDLEEDEEED), and 332–482 (CEDD…GGTG). Residues 192–210 (SHASSRASENQSPSSSNYF) show a composition bias toward polar residues. S203 bears the Phosphoserine mark. Positions 318–327 (PDLEEDEEED) are enriched in acidic residues. Over residues 431–442 (SSSSSSSSSSSS) the composition is skewed to low complexity. Gly residues predominate over residues 469–482 (GMPGGPGGTPGGTG). The C2H2-type 1; atypical zinc-finger motif lies at 490–511 (FLCHCGKAFSHKSMRDRHVNMH). 2 C2H2-type zinc fingers span residues 517-539 (FDCPVCNKKFKMKHHLTEHMKTH) and 545-571 (YECGVCAKKFMWRDSFMRHRGHCERRH). The segment at 571-640 (HRLVGGGGGG…MGFGGGGGTN (70 aa)) is disordered. Gly residues predominate over residues 574-588 (VGGGGGGGPGPGGPT).

The protein belongs to the krueppel C2H2-type zinc-finger protein family.

It is found in the nucleus. Its function is as follows. May be involved in transcriptional regulation. This chain is Zinc finger and BTB domain-containing protein 22 (ZBTB22), found in Canis lupus familiaris (Dog).